We begin with the raw amino-acid sequence, 822 residues long: SKI/DACH domain-containing protein 1 (822 aa).

Positions 245-261 (HHHHHHHHHHHHHHHRA) are enriched in basic residues. A disordered region spans residues 245–370 (HHHHHHHHHH…SSSGSSQVSV (126 aa)). Over residues 278–318 (PHLGSFPESCSSDSESSSYSDHAANDSDFGSSLSSSSNSVS) the composition is skewed to low complexity. Over residues 319–338 (SEEEEEEGEEEEEEEEEEEG) the composition is skewed to acidic residues. A Glycyl lysine isopeptide (Lys-Gly) (interchain with G-Cter in SUMO2) cross-link involves residue K602. Disordered regions lie at residues 658–677 (ETPSLNPLAQSQGLSCTLGS) and 706–732 (LQTPPVKPNLKSARSPRPTGKTETHEG). Over residues 660–675 (PSLNPLAQSQGLSCTL) the composition is skewed to polar residues.

The protein belongs to the DACH/dachshund family.

This Mus musculus (Mouse) protein is SKI/DACH domain-containing protein 1 (Skida1).